A 658-amino-acid polypeptide reads, in one-letter code: DNA-binding protein Rfx5 (658 aa).

The span at 1–10 (MAEDKPDAKS) shows a compositional bias: basic and acidic residues. The tract at residues 1 to 28 (MAEDKPDAKSPKTGARPQGGADAGEPTT) is disordered. N-acetylalanine is present on Ala-2. Position 10 is a phosphoserine (Ser-10). An N-terminal domain region spans residues 24-89 (GEPTTLLQRL…PSLLSNEEYM (66 aa)). The interval 61–65 (LYLYL) is leucine-rich region; critical for dimer formation and for interaction with RFXAP. The RFX-type winged-helix DNA-binding region spans 91–167 (AYRWIRNHLE…YCYSGIRRKT (77 aa)). The short motif at 172–177 (PPLPGL) is the PxLPxI/L motif; mediates interaction with RFXANK element. Phosphoserine is present on Ser-184. Disordered regions lie at residues 250–315 (LAEE…SSVP), 382–422 (AGPG…GLGA), 443–602 (VPPR…DKIP), and 624–658 (KGEADAATQGNKGLKGRVLQSSLTPEHKDPKATPP). Positions 277-309 (GPKKPERPAQPPKEQEARAGTDLPGRAERKKSV) are enriched in basic and acidic residues. Composition is skewed to gly residues over residues 382 to 398 (AGPGPGPGLGPRFGPGP) and 406 to 422 (PGLGAGLGPGLGPGLGA). Composition is skewed to basic and acidic residues over residues 465–476 (PRPHDKGIKRTA) and 489–498 (PVKEMKHETQ). Basic residues predominate over residues 506–516 (KRKRGRPRKKP). Residues 648 to 658 (PEHKDPKATPP) are compositionally biased toward basic and acidic residues.

It belongs to the RFX family. In terms of assembly, homodimer. The RFX heterotetrameric complex consists of 2 molecules of RFX5 and one each of RFXAP and RFX-B/RFXANK; with each subunit representing a separate complementation group. Interacts (via PxLPxI/L motif) with RFXANK (via ankyrin repeats); the interaction is direct. RFX forms cooperative DNA binding complexes with X2BP and CBF/NF-Y. RFX associates with CIITA to form an active transcriptional complex. Post-translationally, phosphorylated.

The protein localises to the nucleus. Its function is as follows. Activates transcription from class II MHC promoters. Recognizes X-boxes. Mediates cooperative binding between RFX and NF-Y. RFX binds the X1 box of MHC-II promoters. The protein is DNA-binding protein Rfx5 (Rfx5) of Mus musculus (Mouse).